The chain runs to 247 residues: Calpain small subunit 2 (247 aa).

Ca(2+) contacts are provided by alanine 88, aspartate 91, glutamate 93, aspartate 131, aspartate 133, threonine 135, lysine 137, glutamate 142, aspartate 161, aspartate 163, serine 165, and aspartate 204. EF-hand domains lie at 118 to 151 (FSLD…NNIK), 148 to 183 (NNIK…AGFQ), 184 to 212 (LNEQ…ISCL), and 213 to 247 (VRLD…TMYS).

In terms of assembly, heterodimer of a large (catalytic) and a small (regulatory) subunit.

The protein resides in the cytoplasm. The protein localises to the cell membrane. Its function is as follows. Calcium-regulated non-lysosomal thiol-protease which catalyzes limited proteolysis of substrates involved in cytoskeletal remodeling and signal transduction. This small subunit may act as a tissue-specific chaperone of the large subunit, possibly by helping it fold into its correct conformation for activity. In Mus musculus (Mouse), this protein is Calpain small subunit 2 (Capns2).